Reading from the N-terminus, the 432-residue chain is Protein ABHD8 (432 aa).

2 disordered regions span residues 47–69 and 121–149; these read KHAG…QGDQ and PAGS…RPKR. Pro residues predominate over residues 52–61; that stretch reads APAPTPPPPL. The segment covering 139-149 has biased composition (basic residues); it reads GRRRRARRPKR. In terms of domain architecture, AB hydrolase-1 spans 170–272; sequence VLFFIHGVGG…HKVIMINGGG (103 aa). Catalysis depends on charge relay system residues serine 245, aspartate 363, and histidine 391.

It belongs to the AB hydrolase superfamily. As to quaternary structure, interacts with NLRP3 (via NACHT and LLR domains); this interaction is enhanced in the presence of NLRP3 inflammasome inducers, such as ATP, nigericin, silica, or alum. Interacts with ZDHHC12.

The protein resides in the cytoplasm. In terms of biological role, negatively regulates NLRP3-driven inflammation. Promotes NLRP3 degradation through the chaperone-mediated autophagy (CMA) pathway, hence attenuating inflammasome activation and IL1B secretion. Acts by recruiting palmitoyltransferase ZDHHC12 to NLRP3, facilitating NLRP3 palmitoylation and subsequent degradation. In Bos taurus (Bovine), this protein is Protein ABHD8.